A 209-amino-acid polypeptide reads, in one-letter code: PRA1 family protein A3 (209 aa).

4 consecutive transmembrane segments (helical) span residues 51–72 (LYYYRTNYFILFVFVLGLALIT), 76–98 (AILGAALTALSLAFLNDSFAATF), 143–163 (LVFVLLGLTASFVLWFTSCGL), and 164–184 (LWVLYALTTALLMILLHASLR).

The protein belongs to the PRA1 family.

It is found in the endosome membrane. In terms of biological role, may be involved in both secretory and endocytic intracellular trafficking in the endosomal/prevacuolar compartments. In Arabidopsis thaliana (Mouse-ear cress), this protein is PRA1 family protein A3 (PRA1A3).